The chain runs to 643 residues: Long-chain fatty acid transport protein 4 (643 aa).

The next 2 membrane-spanning stretches (helical) occupy residues 20–42 (LPWT…WRFI) and 139–156 (FVGL…AALI). AMP is bound at residue 243–254 (YIYTSGTTGLPK).

Belongs to the ATP-dependent AMP-binding enzyme family. As to expression, expressed at highest levels in brain, testis, colon and kidney. Expressed at medium levels in heart and liver, small intestine and stomach. Expressed at low levels in peripheral leukocytes, bone marrow, skeletal muscle and aorta. Expressed in adipose tissue. Expressed in brain gray matter.

It is found in the endoplasmic reticulum membrane. The catalysed reaction is a fatty acid(in) = a fatty acid(out). The enzyme catalyses (9Z,12Z)-octadecadienoate(out) = (9Z,12Z)-octadecadienoate(in). It catalyses the reaction (9Z)-octadecenoate(out) = (9Z)-octadecenoate(in). It carries out the reaction hexadecanoate(out) = hexadecanoate(in). The catalysed reaction is a long-chain fatty acid + ATP + CoA = a long-chain fatty acyl-CoA + AMP + diphosphate. The enzyme catalyses hexadecanoate + ATP + CoA = hexadecanoyl-CoA + AMP + diphosphate. It catalyses the reaction (E)-hexadec-2-enoate + ATP + CoA = (2E)-hexadecenoyl-CoA + AMP + diphosphate. It carries out the reaction (9Z)-octadecenoate + ATP + CoA = (9Z)-octadecenoyl-CoA + AMP + diphosphate. The catalysed reaction is (5Z,8Z,11Z,14Z)-eicosatetraenoate + ATP + CoA = (5Z,8Z,11Z,14Z)-eicosatetraenoyl-CoA + AMP + diphosphate. The enzyme catalyses a very long-chain fatty acid + ATP + CoA = a very long-chain fatty acyl-CoA + AMP + diphosphate. It catalyses the reaction tetracosanoate + ATP + CoA = tetracosanoyl-CoA + AMP + diphosphate. Its function is as follows. Mediates the levels of long-chain fatty acids (LCFA) in the cell by facilitating their transport across cell membranes. Appears to be the principal fatty acid transporter in small intestinal enterocytes. Also functions as an acyl-CoA ligase catalyzing the ATP-dependent formation of fatty acyl-CoA using LCFA and very-long-chain fatty acids (VLCFA) as substrates, which prevents fatty acid efflux from cells and might drive more fatty acid uptake. Plays a role in the formation of the epidermal barrier. Required for fat absorption in early embryogenesis. Probably involved in fatty acid transport across the blood barrier. Indirectly inhibits RPE65 via substrate competition and via production of VLCFA derivatives like lignoceroyl-CoA. Prevents light-induced degeneration of rods and cones. The polypeptide is Long-chain fatty acid transport protein 4 (Homo sapiens (Human)).